The sequence spans 34 residues: Photosystem II reaction center protein M (34 aa).

The helical transmembrane segment at 7 to 27 threads the bilayer; the sequence is GFLATLLFVAVPMLFLIGLYI.

It belongs to the PsbM family. As to quaternary structure, PSII is composed of 1 copy each of membrane proteins PsbA, PsbB, PsbC, PsbD, PsbE, PsbF, PsbH, PsbI, PsbJ, PsbK, PsbL, PsbM, PsbT, PsbX, PsbY, Psb30/Ycf12, peripheral proteins PsbO, CyanoQ (PsbQ), PsbU, PsbV and a large number of cofactors. It forms dimeric complexes.

It is found in the cellular thylakoid membrane. One of the components of the core complex of photosystem II (PSII). PSII is a light-driven water:plastoquinone oxidoreductase that uses light energy to abstract electrons from H(2)O, generating O(2) and a proton gradient subsequently used for ATP formation. It consists of a core antenna complex that captures photons, and an electron transfer chain that converts photonic excitation into a charge separation. This subunit is found at the monomer-monomer interface. The chain is Photosystem II reaction center protein M from Prochlorococcus marinus (strain MIT 9303).